The primary structure comprises 377 residues: Prostaglandin reductase-3 (377 aa).

N6-acetyllysine is present on K35. Residues T185, S205, K209, Y224, S247, I269, and Y275 each contribute to the NADP(+) site. Residue S299 is modified to Phosphoserine. Residues 303–305 (FFL) and N361 each bind NADP(+).

This sequence belongs to the zinc-containing alcohol dehydrogenase family. Quinone oxidoreductase subfamily. As to expression, widely expressed.

It localises to the peroxisome. It carries out the reaction 13,14-dihydro-15-oxo-prostaglandin E2 + NADP(+) = 15-oxoprostaglandin E2 + NADPH + H(+). The enzyme catalyses 13,14-dihydro-15-oxo-prostaglandin E1 + NADP(+) = 15-oxoprostaglandin E1 + NADPH + H(+). The catalysed reaction is 13,14-dihydro-15-oxo-PGF2alpha + NADP(+) = 15-oxoprostaglandin F2alpha + NADPH + H(+). It catalyses the reaction 13,14-dihydro-15-oxo-prostaglandin F1alpha + NADP(+) = 15-oxoprostaglandin F1alpha + NADPH + H(+). In terms of biological role, functions as 15-oxo-prostaglandin 13-reductase and acts on 15-keto-PGE1, 15-keto-PGE2, 15-keto-PGE1-alpha and 15-keto-PGE2-alpha with highest efficiency towards 15-keto-PGE2-alpha. Overexpression represses transcriptional activity of PPARG and inhibits adipocyte differentiation. The chain is Prostaglandin reductase-3 from Mus musculus (Mouse).